We begin with the raw amino-acid sequence, 417 residues long: Serine hydroxymethyltransferase (417 aa).

Residues L121 and 125–127 (GHL) each bind (6S)-5,6,7,8-tetrahydrofolate. K229 is subject to N6-(pyridoxal phosphate)lysine. (6S)-5,6,7,8-tetrahydrofolate is bound at residue 355–357 (SPF).

Belongs to the SHMT family. Homodimer. Requires pyridoxal 5'-phosphate as cofactor.

The protein localises to the cytoplasm. The enzyme catalyses (6R)-5,10-methylene-5,6,7,8-tetrahydrofolate + glycine + H2O = (6S)-5,6,7,8-tetrahydrofolate + L-serine. Its pathway is one-carbon metabolism; tetrahydrofolate interconversion. It functions in the pathway amino-acid biosynthesis; glycine biosynthesis; glycine from L-serine: step 1/1. Functionally, catalyzes the reversible interconversion of serine and glycine with tetrahydrofolate (THF) serving as the one-carbon carrier. This reaction serves as the major source of one-carbon groups required for the biosynthesis of purines, thymidylate, methionine, and other important biomolecules. Also exhibits THF-independent aldolase activity toward beta-hydroxyamino acids, producing glycine and aldehydes, via a retro-aldol mechanism. This is Serine hydroxymethyltransferase from Shewanella putrefaciens (strain CN-32 / ATCC BAA-453).